The primary structure comprises 796 residues: Transcription factor kayak (796 aa).

Disordered regions lie at residues 109–132, 315–341, 374–429, and 442–490; these read AYQQ…SNTS, VVNN…SNTV, FNCG…GSNG, and VGSA…RNKL. Low complexity predominate over residues 402–429; it reads TTDTSSAATDSTSYQNGGHMFGNNGSNG. Polar residues predominate over residues 447–457; sequence RGTSSTSNNAT. The bZIP domain occupies 478–541; the sequence is EEKRRVRRER…HQLNFVLEAH (64 aa). Residues 480–499 form a basic motif region; it reads KRRVRRERNKLAAARCRKRR. The interval 506-534 is leucine-zipper; that stretch reads LSEEVDGLLKKNEDLKKEIEILTNTRHQL. The segment at 569–601 is disordered; sequence SSGSNGSHHHNSNSNNSNNNNSNNNNNSNSNDS. Phosphoserine is present on Ser-621. 2 disordered regions span residues 642–661 and 774–796; these read PHDA…PPAA and SSQN…LVSL.

The protein belongs to the bZIP family. Fos subfamily. In terms of assembly, homodimer. Heterodimer with Jra. The kay-Jra heterodimer binds more stably to the AP-1 site than either of the two proteins alone.

Its subcellular location is the nucleus. In terms of biological role, developmentally regulated transcription factor AP-1 binds and recognizes the enhancer DNA sequence: 5'-TGA[CG]TCA-3'. May play a role in the function or determination of a particular subset of cells in the developing embryo. It is able to carry out its function either independently of or in conjunction with Jra. The sequence is that of Transcription factor kayak from Drosophila grimshawi (Hawaiian fruit fly).